A 147-amino-acid chain; its full sequence is Ribonuclease H (147 aa).

The region spanning 1-142 (MTEIVEIFTD…ADALARSAIT (142 aa)) is the RNase H type-1 domain. Residues Asp10, Glu48, Asp70, and Asp134 each coordinate Mg(2+).

The protein belongs to the RNase H family. As to quaternary structure, monomer. Mg(2+) serves as cofactor.

It is found in the cytoplasm. The catalysed reaction is Endonucleolytic cleavage to 5'-phosphomonoester.. Its function is as follows. Endonuclease that specifically degrades the RNA of RNA-DNA hybrids. This is Ribonuclease H from Nitrosococcus oceani (strain ATCC 19707 / BCRC 17464 / JCM 30415 / NCIMB 11848 / C-107).